A 66-amino-acid chain; its full sequence is Phylloseptin-H5 (66 aa).

Residues 1–22 (MAFLKKSLFLVLFLGLVSLSIC) form the signal peptide. Positions 23 to 44 (EEEKRETEEEENEQEDDDKSEE) are excised as a propeptide. The tract at residues 24–44 (EEKRETEEEENEQEDDDKSEE) is disordered. Positions 30–41 (EEEENEQEDDDK) are enriched in acidic residues. Position 65 is a phenylalanine amide (Phe-65).

As to expression, expressed by the skin glands.

It is found in the secreted. In terms of biological role, has antibacterial activity against the Gram-negative bacteria E.coli and P.aeruginosa, and the Gram-positive bacterium S.aureus. No hemolytic activity. In Pithecopus hypochondrialis (Orange-legged leaf frog), this protein is Phylloseptin-H5 (psn7).